A 212-amino-acid polypeptide reads, in one-letter code: Thymidylate kinase (212 aa).

10-17 (GLEGAGKT) contributes to the ATP binding site.

This sequence belongs to the thymidylate kinase family.

It catalyses the reaction dTMP + ATP = dTDP + ADP. In terms of biological role, phosphorylation of dTMP to form dTDP in both de novo and salvage pathways of dTTP synthesis. In Yersinia enterocolitica serotype O:8 / biotype 1B (strain NCTC 13174 / 8081), this protein is Thymidylate kinase.